Consider the following 649-residue polypeptide: ABC transporter G family member 5 (649 aa).

Positions 42-284 (VKTEEESLKL…LRSNGLHPPL (243 aa)) constitute an ABC transporter domain. 80-87 (GPSGAGKS) serves as a coordination point for ATP. The segment at 308–336 (SRRAAHVLTPQTTLQEKRSEDSQGESKSG) is disordered. Positions 371-581 (EETMILTHRF…PFEGFLINEF (211 aa)) constitute an ABC transmembrane type-2 domain. Helical transmembrane passes span 390 to 410 (LFAC…LIFH), 425 to 445 (LFAF…PIFL), 474 to 494 (LPFL…LVGL), 506 to 526 (LLIW…SALV), 529 to 549 (FIVG…FSGY), and 617 to 637 (VVIM…ILRC).

The protein belongs to the ABC transporter superfamily. ABCG family. Eye pigment precursor importer (TC 3.A.1.204) subfamily.

The protein localises to the membrane. The polypeptide is ABC transporter G family member 5 (ABCG5) (Arabidopsis thaliana (Mouse-ear cress)).